A 162-amino-acid polypeptide reads, in one-letter code: Transcription elongation factor GreB (162 aa).

Positions glycine 52 to isoleucine 76 form a coiled coil.

The protein belongs to the GreA/GreB family. GreB subfamily.

In terms of biological role, necessary for efficient RNA polymerase transcription elongation past template-encoded arresting sites. The arresting sites in DNA have the property of trapping a certain fraction of elongating RNA polymerases that pass through, resulting in locked ternary complexes. Cleavage of the nascent transcript by cleavage factors such as GreA or GreB allows the resumption of elongation from the new 3'terminus. GreB releases sequences of up to 9 nucleotides in length. In Haemophilus ducreyi (strain 35000HP / ATCC 700724), this protein is Transcription elongation factor GreB.